A 429-amino-acid chain; its full sequence is Tyrosine-protein kinase STYK1 (429 aa).

Residues valine 30–tryptophan 50 traverse the membrane as a helical segment. The segment at serine 58–glycine 83 is disordered. Residues leucine 119 to alanine 390 enclose the Protein kinase domain. ATP-binding positions include isoleucine 125–leucine 133 and lysine 152. Residue aspartate 256 is the Proton acceptor of the active site.

This sequence belongs to the protein kinase superfamily. Tyr protein kinase family. In terms of tissue distribution, highly expressed in colon and small intestine. Weakly or not expressed in spleen, skeletal muscle, liver, kidney, heart and brain. Expressed in transformed kidney cell lines (COS-1 and HEK293T).

Its subcellular location is the membrane. It catalyses the reaction L-tyrosyl-[protein] + ATP = O-phospho-L-tyrosyl-[protein] + ADP + H(+). Probable tyrosine protein-kinase, which has strong transforming capabilities on a variety of cell lines including NIH 3T3 fibroblasts and on athymic nude mice. When overexpressed, it can also induce tumor cell invasion as well as metastasis in distant organs. May act by activating both MAP kinase and phosphatidylinositol 3'-kinases (PI3K) pathways. The sequence is that of Tyrosine-protein kinase STYK1 (Styk1) from Mus musculus (Mouse).